A 408-amino-acid chain; its full sequence is LL-diaminopimelate aminotransferase (408 aa).

The substrate site is built by Tyr-15 and Gly-42. Pyridoxal 5'-phosphate-binding positions include Tyr-72, 108 to 109 (SK), Tyr-132, Asn-187, Tyr-218, and 246 to 248 (SFS). The substrate site is built by Lys-109, Tyr-132, and Asn-187. Position 249 is an N6-(pyridoxal phosphate)lysine (Lys-249). Residues Arg-257 and Asn-292 each contribute to the pyridoxal 5'-phosphate site. Residues Asn-292 and Arg-388 each coordinate substrate.

This sequence belongs to the class-I pyridoxal-phosphate-dependent aminotransferase family. LL-diaminopimelate aminotransferase subfamily. Homodimer. Pyridoxal 5'-phosphate serves as cofactor.

It catalyses the reaction (2S,6S)-2,6-diaminopimelate + 2-oxoglutarate = (S)-2,3,4,5-tetrahydrodipicolinate + L-glutamate + H2O + H(+). It participates in amino-acid biosynthesis; L-lysine biosynthesis via DAP pathway; LL-2,6-diaminopimelate from (S)-tetrahydrodipicolinate (aminotransferase route): step 1/1. Functionally, involved in the synthesis of meso-diaminopimelate (m-DAP or DL-DAP), required for both lysine and peptidoglycan biosynthesis. Catalyzes the direct conversion of tetrahydrodipicolinate to LL-diaminopimelate. The polypeptide is LL-diaminopimelate aminotransferase (Prochlorococcus marinus (strain MIT 9515)).